A 169-amino-acid polypeptide reads, in one-letter code: Crossover junction endodeoxyribonuclease RuvC (169 aa).

Residues Asp-12, Glu-72, and Asp-144 contribute to the active site. Residues Asp-12, Glu-72, and Asp-144 each coordinate Mg(2+).

Belongs to the RuvC family. In terms of assembly, homodimer which binds Holliday junction (HJ) DNA. The HJ becomes 2-fold symmetrical on binding to RuvC with unstacked arms; it has a different conformation from HJ DNA in complex with RuvA. In the full resolvosome a probable DNA-RuvA(4)-RuvB(12)-RuvC(2) complex forms which resolves the HJ. It depends on Mg(2+) as a cofactor.

Its subcellular location is the cytoplasm. The catalysed reaction is Endonucleolytic cleavage at a junction such as a reciprocal single-stranded crossover between two homologous DNA duplexes (Holliday junction).. Its function is as follows. The RuvA-RuvB-RuvC complex processes Holliday junction (HJ) DNA during genetic recombination and DNA repair. Endonuclease that resolves HJ intermediates. Cleaves cruciform DNA by making single-stranded nicks across the HJ at symmetrical positions within the homologous arms, yielding a 5'-phosphate and a 3'-hydroxyl group; requires a central core of homology in the junction. The consensus cleavage sequence is 5'-(A/T)TT(C/G)-3'. Cleavage occurs on the 3'-side of the TT dinucleotide at the point of strand exchange. HJ branch migration catalyzed by RuvA-RuvB allows RuvC to scan DNA until it finds its consensus sequence, where it cleaves and resolves the cruciform DNA. The chain is Crossover junction endodeoxyribonuclease RuvC from Azorhizobium caulinodans (strain ATCC 43989 / DSM 5975 / JCM 20966 / LMG 6465 / NBRC 14845 / NCIMB 13405 / ORS 571).